A 466-amino-acid chain; its full sequence is Asparagine--tRNA ligase (466 aa).

This sequence belongs to the class-II aminoacyl-tRNA synthetase family. In terms of assembly, homodimer.

Its subcellular location is the cytoplasm. It carries out the reaction tRNA(Asn) + L-asparagine + ATP = L-asparaginyl-tRNA(Asn) + AMP + diphosphate + H(+). This Pectobacterium atrosepticum (strain SCRI 1043 / ATCC BAA-672) (Erwinia carotovora subsp. atroseptica) protein is Asparagine--tRNA ligase.